The following is a 153-amino-acid chain: NAD(P)H-quinone oxidoreductase subunit N (153 aa).

Belongs to the complex I NdhN subunit family. As to quaternary structure, NDH-1 can be composed of about 15 different subunits; different subcomplexes with different compositions have been identified which probably have different functions.

The protein resides in the cellular thylakoid membrane. The enzyme catalyses a plastoquinone + NADH + (n+1) H(+)(in) = a plastoquinol + NAD(+) + n H(+)(out). It catalyses the reaction a plastoquinone + NADPH + (n+1) H(+)(in) = a plastoquinol + NADP(+) + n H(+)(out). In terms of biological role, NDH-1 shuttles electrons from an unknown electron donor, via FMN and iron-sulfur (Fe-S) centers, to quinones in the respiratory and/or the photosynthetic chain. The immediate electron acceptor for the enzyme in this species is believed to be plastoquinone. Couples the redox reaction to proton translocation, and thus conserves the redox energy in a proton gradient. Cyanobacterial NDH-1 also plays a role in inorganic carbon-concentration. This Synechococcus sp. (strain RCC307) protein is NAD(P)H-quinone oxidoreductase subunit N.